Consider the following 493-residue polypeptide: Dipeptide permease D (493 aa).

13 helical membrane-spanning segments follow: residues 14-34, 49-69, 91-111, 138-158, 167-187, 212-232, 235-255, 267-287, 312-332, 344-364, 379-399, 413-433, and 458-478; these read VVALQIWEYFSFYGMRALLIL, ELFSAYCSLVYVTPILGGYLA, LVLGASEIAPTFLYLSLAIIV, GGFSLLYAAGNIGSIVAPIAC, WAMGFALAAIGMLAGLVIFLC, NWGWLLILLVAAPLLITVLFW, WSVYALIVATAISLVVLAKIY, LGLIVTLTLFSMLFWAFAQQG, MFQSVNAFAVMLCGVVLAWLV, IWGKFALGLGLMSAGFCILTL, LMVLGLAVMGFAELFIDPVAM, VLTGIYMLLSGAIANYLAGVI, and VFEQITWGALACVGVVLLIWL.

This sequence belongs to the major facilitator superfamily. Proton-dependent oligopeptide transporter (POT/PTR) (TC 2.A.17) family. DtpD subfamily.

It is found in the cell inner membrane. Functionally, probable proton-dependent permease that transports dipeptides. In Salmonella choleraesuis (strain SC-B67), this protein is Dipeptide permease D.